A 1036-amino-acid chain; its full sequence is Isoleucine--tRNA ligase (1036 aa).

A 'HIGH' region motif is present at residues 46–56; that stretch reads PFATGLPHYGH. A 'KMSKS' region motif is present at residues 589 to 593; the sequence is KMSKR. Residue Lys592 participates in ATP binding.

It belongs to the class-I aminoacyl-tRNA synthetase family. IleS type 2 subfamily. Monomer. Zn(2+) serves as cofactor.

The protein localises to the cytoplasm. The catalysed reaction is tRNA(Ile) + L-isoleucine + ATP = L-isoleucyl-tRNA(Ile) + AMP + diphosphate. Catalyzes the attachment of isoleucine to tRNA(Ile). As IleRS can inadvertently accommodate and process structurally similar amino acids such as valine, to avoid such errors it has two additional distinct tRNA(Ile)-dependent editing activities. One activity is designated as 'pretransfer' editing and involves the hydrolysis of activated Val-AMP. The other activity is designated 'posttransfer' editing and involves deacylation of mischarged Val-tRNA(Ile). The chain is Isoleucine--tRNA ligase from Chlamydia trachomatis serovar L2b (strain UCH-1/proctitis).